The primary structure comprises 523 residues: Anthranilate synthase component 1 (523 aa).

Residues serine 45 and proline 296–methionine 298 each bind L-tryptophan. Glycine 333–threonine 334 is a binding site for chorismate. Glutamate 366 lines the Mg(2+) pocket. Residues tyrosine 454, arginine 474, glycine 488–glycine 490, and glycine 490 each bind chorismate. Glutamate 503 is a Mg(2+) binding site.

This sequence belongs to the anthranilate synthase component I family. As to quaternary structure, heterotetramer consisting of two non-identical subunits: a beta subunit (TrpG) and a large alpha subunit (TrpE). The cofactor is Mg(2+).

The enzyme catalyses chorismate + L-glutamine = anthranilate + pyruvate + L-glutamate + H(+). It participates in amino-acid biosynthesis; L-tryptophan biosynthesis; L-tryptophan from chorismate: step 1/5. With respect to regulation, feedback inhibited by tryptophan. In terms of biological role, part of a heterotetrameric complex that catalyzes the two-step biosynthesis of anthranilate, an intermediate in the biosynthesis of L-tryptophan. In the first step, the glutamine-binding beta subunit (TrpG) of anthranilate synthase (AS) provides the glutamine amidotransferase activity which generates ammonia as a substrate that, along with chorismate, is used in the second step, catalyzed by the large alpha subunit of AS (TrpE) to produce anthranilate. In the absence of TrpG, TrpE can synthesize anthranilate directly from chorismate and high concentrations of ammonia. This chain is Anthranilate synthase component 1 (trpE), found in Vibrio cholerae serotype O1 (strain ATCC 39315 / El Tor Inaba N16961).